We begin with the raw amino-acid sequence, 470 residues long: 6-phospho-beta-glucosidase BglB (470 aa).

Glu-172 functions as the Proton donor in the catalytic mechanism. Glu-361 (nucleophile) is an active-site residue.

The protein belongs to the glycosyl hydrolase 1 family.

The catalysed reaction is 6-phospho-beta-D-glucosyl-(1-&gt;4)-D-glucose + H2O = D-glucose 6-phosphate + D-glucose. Its function is as follows. Catalyzes the hydrolysis of phosphorylated beta-glucosides into glucose-6-phosphate (G-6-P) and aglycone. It has a high affinity for phosphorylated aromatic beta-glucosides (p-nitrophenyl-beta-glucoside, phenyl beta-glucoside, arbutin and phosphorylated salicin), and a low affinity for phosphorylated beta-methyl-glucoside. This chain is 6-phospho-beta-glucosidase BglB (bglB), found in Escherichia coli (strain K12).